Reading from the N-terminus, the 341-residue chain is MGNTTSCCVSSSPKLRRNAHSRLESYRPDTDLSREDTGCNLQHISDRENIDDLNMEFNPSDHPRASTIFLSKSQTDVREKRKSLFINHHPPGQIARKYSSCSTIFLDDSTVSQPNLKYTIKCVALAIYYHIKNRDPDGRMLLDIFDENLHPLSKSEVPPDYDKHNPEQKQIYRFVRTLFSAAQLTAECAIVTLVYLERLLTYAEIDICPANWKRIVLGAILLASKVWDDQAVWNVDYCQILKDITVEDMNELERQFLELLQFNINVPSSVYAKYYFDLRSLAEANNLSFPLEPLSRERAHKLEAISRLCEDKYKDLRRSARKRSASADNLTLPRWSPAIIS.

Gly-2 is lipidated: N-myristoyl glycine. Ser-21 and Ser-25 each carry phosphoserine. Thr-30 is modified (phosphothreonine). Residue Ser-33 is modified to Phosphoserine. Phosphothreonine is present on Thr-37. A Phosphothreonine; by CDK14 modification is found at Thr-67. Residues Ser-71 and Ser-73 each carry the phosphoserine; by CDK14 modification. A Phosphothreonine modification is found at Thr-75. A Phosphoserine; by CDK14 modification is found at Ser-83. 3 positions are modified to phosphoserine: Ser-99, Ser-100, and Ser-102. Residues Asp-143 to Asn-265 enclose the Cyclin N-terminal domain. At Ser-280 the chain carries Phosphoserine. A phosphoserine; by CDK14 mark is found at Ser-288 and Ser-295. 2 positions are modified to phosphoserine: Ser-324 and Ser-326. Position 331 is a phosphothreonine (Thr-331).

This sequence belongs to the cyclin family. Cyclin Y subfamily. In terms of assembly, found in a complex with CAPRIN2, LRP6 and CDK14 during G2/M stage; CAPRIN2 functions as a scaffold for the complex by binding to CCNY via its N terminus and to CDK14 via its C terminus. Interacts with CDK14. Interacts with CDK16. Interacts with LRP6. In terms of processing, ubiquitinated; leading to its degradation. Post-translationally, heavily phosphorylated. Phosphorylation at Ser-71 and Ser-73 by CDK14 is enhanced during the G2 and M cell cycle phases, and creates a phosphodegron triggering SCF-dependent ubiquitination. As to expression, widely expressed.

Its subcellular location is the cell membrane. The protein localises to the nucleus. Positive regulatory subunit of the cyclin-dependent kinases CDK14/PFTK1 and CDK16. Acts as a cell-cycle regulator of Wnt signaling pathway during G2/M phase by recruiting CDK14/PFTK1 to the plasma membrane and promoting phosphorylation of LRP6, leading to the activation of the Wnt signaling pathway. Recruits CDK16 to the plasma membrane. Isoform 3 might play a role in the activation of MYC-mediated transcription. This Homo sapiens (Human) protein is Cyclin-Y (CCNY).